We begin with the raw amino-acid sequence, 173 residues long: MLGSTDLVLLGKVVATHGIRGQLSVVPFSGEFSTILSMQTVYLSGPDNRKESFEVDRAAVHRNRVLLTLKGFANINEVLHLVGRELFARRDQFPPLDEGEFYWCDLIGLSVTTSEGLSLGRIEEIIATGSNDVYVVRDGEREYLIPALEDIVVGVDLDKGIMTVSPTEGLLDL.

In terms of domain architecture, PRC barrel spans 98 to 170 (EGEFYWCDLI…IMTVSPTEGL (73 aa)).

It belongs to the RimM family. In terms of assembly, binds ribosomal protein uS19.

The protein resides in the cytoplasm. Its function is as follows. An accessory protein needed during the final step in the assembly of 30S ribosomal subunit, possibly for assembly of the head region. Essential for efficient processing of 16S rRNA. May be needed both before and after RbfA during the maturation of 16S rRNA. It has affinity for free ribosomal 30S subunits but not for 70S ribosomes. This is Ribosome maturation factor RimM from Geobacter metallireducens (strain ATCC 53774 / DSM 7210 / GS-15).